We begin with the raw amino-acid sequence, 448 residues long: Ribulose bisphosphate carboxylase large chain (448 aa).

Positions 1–2 are excised as a propeptide; that stretch reads MS. N-acetylproline is present on Pro-3. The residue at position 14 (Lys-14) is an N6,N6,N6-trimethyllysine. Substrate-binding residues include Asn-122 and Thr-172. Lys-174 serves as the catalytic Proton acceptor. Lys-176 contacts substrate. Mg(2+)-binding residues include Lys-200, Asp-202, and Glu-203. At Lys-200 the chain carries N6-carboxylysine. The active-site Proton acceptor is His-293. Residues Arg-294, His-326, and Ser-378 each coordinate substrate.

The protein belongs to the RuBisCO large chain family. Type I subfamily. In terms of assembly, heterohexadecamer of 8 large chains and 8 small chains; disulfide-linked. The disulfide link is formed within the large subunit homodimers. Mg(2+) is required as a cofactor. The disulfide bond which can form in the large chain dimeric partners within the hexadecamer appears to be associated with oxidative stress and protein turnover.

The protein resides in the plastid. Its subcellular location is the chloroplast. The enzyme catalyses 2 (2R)-3-phosphoglycerate + 2 H(+) = D-ribulose 1,5-bisphosphate + CO2 + H2O. It carries out the reaction D-ribulose 1,5-bisphosphate + O2 = 2-phosphoglycolate + (2R)-3-phosphoglycerate + 2 H(+). In terms of biological role, ruBisCO catalyzes two reactions: the carboxylation of D-ribulose 1,5-bisphosphate, the primary event in carbon dioxide fixation, as well as the oxidative fragmentation of the pentose substrate in the photorespiration process. Both reactions occur simultaneously and in competition at the same active site. In Dichapetalum crassifolium, this protein is Ribulose bisphosphate carboxylase large chain.